The primary structure comprises 444 residues: Killer cell immunoglobulin-like receptor 3DL1 (444 aa).

An N-terminal signal peptide occupies residues 1 to 21 (MSLMVVSMACVGLFLVQRAGP). Residues 22-340 (HMGGQDKPFL…SKSGNPRHLH (319 aa)) are Extracellular-facing. 3 Ig-like C2-type domains span residues 42–102 (GGHV…HPHS), 137–202 (GERV…VTHT), and 237–300 (GESV…FRHS). Disulfide bonds link Cys-49/Cys-95, Cys-144/Cys-195, and Cys-244/Cys-293. N-linked (GlcNAc...) asparagine glycosylation is found at Asn-92, Asn-179, and Asn-273. The disordered stretch occupies residues 315-334 (VTGNPSSSWPSPTEPSSKSG). Residues 319-333 (PSSSWPSPTEPSSKS) show a composition bias toward low complexity. A helical membrane pass occupies residues 341–360 (ILIGTSVVIILFILLLFFLL). Residues 361 to 444 (HLWCSNKKNA…KPRSKVVSCP (84 aa)) are Cytoplasmic-facing. Disordered regions lie at residues 375–394 (QEPAGNRTANSEDSDEQDPE) and 409–444 (RKITRPSQRPKTPPTDTILYTELPNAKPRSKVVSCP).

The protein belongs to the immunoglobulin superfamily.

The protein localises to the cell membrane. Receptor on natural killer (NK) cells for HLA Bw4 allele. Inhibits the activity of NK cells thus preventing cell lysis. The sequence is that of Killer cell immunoglobulin-like receptor 3DL1 from Homo sapiens (Human).